We begin with the raw amino-acid sequence, 109 residues long: Small ribosomal subunit protein bS20 (109 aa).

Residues 1-26 (MANIKSAKKRAIQSEKRRKHNASRRS) are disordered.

It belongs to the bacterial ribosomal protein bS20 family.

In terms of biological role, binds directly to 16S ribosomal RNA. The sequence is that of Small ribosomal subunit protein bS20 from Hamiltonella defensa subsp. Acyrthosiphon pisum (strain 5AT).